Reading from the N-terminus, the 336-residue chain is D-alanine--D-alanine ligase (336 aa).

The 207-residue stretch at 124–330 folds into the ATP-grasp domain; the sequence is KMWFSALGIP…FTQYLSLVIN (207 aa). Residue 154–209 coordinates ATP; that stretch reads ALEKWGSIFVKAASQGSSVGCYKVDEASKVLGVLKDAFGYAPYVIVEKTIKARELE. 3 residues coordinate Mg(2+): Asp-284, Glu-297, and Asn-299.

This sequence belongs to the D-alanine--D-alanine ligase family. Mg(2+) serves as cofactor. Mn(2+) is required as a cofactor.

It is found in the cytoplasm. It carries out the reaction 2 D-alanine + ATP = D-alanyl-D-alanine + ADP + phosphate + H(+). Its pathway is cell wall biogenesis; peptidoglycan biosynthesis. Cell wall formation. This Shewanella oneidensis (strain ATCC 700550 / JCM 31522 / CIP 106686 / LMG 19005 / NCIMB 14063 / MR-1) protein is D-alanine--D-alanine ligase.